The sequence spans 70 residues: SPbeta prophage-derived uncharacterized protein YotJ (70 aa).

In Bacillus subtilis (strain 168), this protein is SPbeta prophage-derived uncharacterized protein YotJ (yotJ).